Here is a 412-residue protein sequence, read N- to C-terminus: Serine hydroxymethyltransferase (412 aa).

Residues Leu-117 and 121–123 (GHL) contribute to the (6S)-5,6,7,8-tetrahydrofolate site. An N6-(pyridoxal phosphate)lysine modification is found at Lys-226.

The protein belongs to the SHMT family. Homodimer. It depends on pyridoxal 5'-phosphate as a cofactor.

It is found in the cytoplasm. The enzyme catalyses (6R)-5,10-methylene-5,6,7,8-tetrahydrofolate + glycine + H2O = (6S)-5,6,7,8-tetrahydrofolate + L-serine. Its pathway is one-carbon metabolism; tetrahydrofolate interconversion. It participates in amino-acid biosynthesis; glycine biosynthesis; glycine from L-serine: step 1/1. Its function is as follows. Catalyzes the reversible interconversion of serine and glycine with tetrahydrofolate (THF) serving as the one-carbon carrier. This reaction serves as the major source of one-carbon groups required for the biosynthesis of purines, thymidylate, methionine, and other important biomolecules. Also exhibits THF-independent aldolase activity toward beta-hydroxyamino acids, producing glycine and aldehydes, via a retro-aldol mechanism. The sequence is that of Serine hydroxymethyltransferase from Staphylococcus aureus (strain bovine RF122 / ET3-1).